Here is a 249-residue protein sequence, read N- to C-terminus: ATP synthase subunit a 1 (249 aa).

Helical transmembrane passes span 26–46 (FTNV…FLYL), 84–104 (FFPF…LGLF), 114–134 (IIVT…YGFF), 143–163 (LFVP…IEII), 193–213 (FVVS…LPLI), and 216–236 (VAIT…FTVL).

The protein belongs to the ATPase A chain family. F-type ATPases have 2 components, CF(1) - the catalytic core - and CF(0) - the membrane proton channel. CF(1) has five subunits: alpha(3), beta(3), gamma(1), delta(1), epsilon(1). CF(0) has three main subunits: a(1), b(2) and c(9-12). The alpha and beta chains form an alternating ring which encloses part of the gamma chain. CF(1) is attached to CF(0) by a central stalk formed by the gamma and epsilon chains, while a peripheral stalk is formed by the delta and b chains.

It localises to the cell inner membrane. Functionally, key component of the proton channel; it plays a direct role in the translocation of protons across the membrane. In Brucella anthropi (strain ATCC 49188 / DSM 6882 / CCUG 24695 / JCM 21032 / LMG 3331 / NBRC 15819 / NCTC 12168 / Alc 37) (Ochrobactrum anthropi), this protein is ATP synthase subunit a 1.